A 155-amino-acid polypeptide reads, in one-letter code: SsrA-binding protein (155 aa).

This sequence belongs to the SmpB family.

The protein resides in the cytoplasm. Required for rescue of stalled ribosomes mediated by trans-translation. Binds to transfer-messenger RNA (tmRNA), required for stable association of tmRNA with ribosomes. tmRNA and SmpB together mimic tRNA shape, replacing the anticodon stem-loop with SmpB. tmRNA is encoded by the ssrA gene; the 2 termini fold to resemble tRNA(Ala) and it encodes a 'tag peptide', a short internal open reading frame. During trans-translation Ala-aminoacylated tmRNA acts like a tRNA, entering the A-site of stalled ribosomes, displacing the stalled mRNA. The ribosome then switches to translate the ORF on the tmRNA; the nascent peptide is terminated with the 'tag peptide' encoded by the tmRNA and targeted for degradation. The ribosome is freed to recommence translation, which seems to be the essential function of trans-translation. The chain is SsrA-binding protein from Streptococcus pyogenes serotype M5 (strain Manfredo).